The following is a 91-amino-acid chain: Aspartyl/glutamyl-tRNA(Asn/Gln) amidotransferase subunit C (91 aa).

The disordered stretch occupies residues 68–91; sequence LDQDDALANAPETEDGRFKGPNVS.

It belongs to the GatC family. As to quaternary structure, heterotrimer of A, B and C subunits.

The enzyme catalyses L-glutamyl-tRNA(Gln) + L-glutamine + ATP + H2O = L-glutaminyl-tRNA(Gln) + L-glutamate + ADP + phosphate + H(+). It carries out the reaction L-aspartyl-tRNA(Asn) + L-glutamine + ATP + H2O = L-asparaginyl-tRNA(Asn) + L-glutamate + ADP + phosphate + 2 H(+). Functionally, allows the formation of correctly charged Asn-tRNA(Asn) or Gln-tRNA(Gln) through the transamidation of misacylated Asp-tRNA(Asn) or Glu-tRNA(Gln) in organisms which lack either or both of asparaginyl-tRNA or glutaminyl-tRNA synthetases. The reaction takes place in the presence of glutamine and ATP through an activated phospho-Asp-tRNA(Asn) or phospho-Glu-tRNA(Gln). The chain is Aspartyl/glutamyl-tRNA(Asn/Gln) amidotransferase subunit C from Halobacterium salinarum (strain ATCC 29341 / DSM 671 / R1).